Here is a 78-residue protein sequence, read N- to C-terminus: Conotoxin Cl14.9 (78 aa).

Positions 1–22 are cleaved as a signal peptide; the sequence is MTAKATLLVLALVVMATSGVSS. Residues 23-47 constitute a propeptide that is removed on maturation; that stretch reads ASVAGGPVVNSDTVSRSDPERLSTR. Position 70 is an isoleucine amide (Ile70). Residues 74-78 constitute a propeptide that is removed on maturation; that stretch reads DITQQ.

In terms of processing, contains 2 disulfide bonds. As to expression, expressed by the venom duct.

It is found in the secreted. The chain is Conotoxin Cl14.9 from Californiconus californicus (California cone).